The primary structure comprises 496 residues: Glutamyl-tRNA(Gln) amidotransferase subunit A (496 aa).

Active-site charge relay system residues include Lys-75 and Ser-150. The active-site Acyl-ester intermediate is Ser-174.

It belongs to the amidase family. GatA subfamily. Heterotrimer of A, B and C subunits.

The catalysed reaction is L-glutamyl-tRNA(Gln) + L-glutamine + ATP + H2O = L-glutaminyl-tRNA(Gln) + L-glutamate + ADP + phosphate + H(+). Its function is as follows. Allows the formation of correctly charged Gln-tRNA(Gln) through the transamidation of misacylated Glu-tRNA(Gln) in organisms which lack glutaminyl-tRNA synthetase. The reaction takes place in the presence of glutamine and ATP through an activated gamma-phospho-Glu-tRNA(Gln). This chain is Glutamyl-tRNA(Gln) amidotransferase subunit A, found in Burkholderia pseudomallei (strain 1106a).